An 82-amino-acid chain; its full sequence is Conotoxin Tx6.6 (82 aa).

Residues 1–19 (MKLTCVMIVAVLFLTAWTL) form the signal peptide. A propeptide spanning residues 20 to 51 (VMADDSNNGLANLFSKLRDEMEDPEGSKLEKK) is cleaved from the precursor. 3 cysteine pairs are disulfide-bonded: Cys53-Cys71, Cys60-Cys76, and Cys70-Cys81. At Ala82 the chain carries Alanine amide; partial.

It belongs to the O1 superfamily. In terms of tissue distribution, expressed by the venom duct.

The protein resides in the secreted. Omega-conotoxins act at presynaptic membranes, they bind and block voltage-gated calcium channels (Cav). The chain is Conotoxin Tx6.6 from Conus textile (Cloth-of-gold cone).